We begin with the raw amino-acid sequence, 861 residues long: Leucine--tRNA ligase (861 aa).

The short motif at proline 42–histidine 52 is the 'HIGH' region element. Residues lysine 620–serine 624 carry the 'KMSKS' region motif. ATP is bound at residue lysine 623.

Belongs to the class-I aminoacyl-tRNA synthetase family.

The protein localises to the cytoplasm. The enzyme catalyses tRNA(Leu) + L-leucine + ATP = L-leucyl-tRNA(Leu) + AMP + diphosphate. The protein is Leucine--tRNA ligase of Baumannia cicadellinicola subsp. Homalodisca coagulata.